The following is a 940-amino-acid chain: Isoleucine--tRNA ligase (940 aa).

A 'HIGH' region motif is present at residues 58 to 68; the sequence is PYANGSIHIGH. Position 564 (glutamate 564) interacts with L-isoleucyl-5'-AMP. A 'KMSKS' region motif is present at residues 605–609; that stretch reads KMSKS. ATP is bound at residue lysine 608. Positions 903, 906, 923, and 926 each coordinate Zn(2+).

The protein belongs to the class-I aminoacyl-tRNA synthetase family. IleS type 1 subfamily. As to quaternary structure, monomer. It depends on Zn(2+) as a cofactor.

It is found in the cytoplasm. The catalysed reaction is tRNA(Ile) + L-isoleucine + ATP = L-isoleucyl-tRNA(Ile) + AMP + diphosphate. Catalyzes the attachment of isoleucine to tRNA(Ile). As IleRS can inadvertently accommodate and process structurally similar amino acids such as valine, to avoid such errors it has two additional distinct tRNA(Ile)-dependent editing activities. One activity is designated as 'pretransfer' editing and involves the hydrolysis of activated Val-AMP. The other activity is designated 'posttransfer' editing and involves deacylation of mischarged Val-tRNA(Ile). This Shewanella baltica (strain OS223) protein is Isoleucine--tRNA ligase.